We begin with the raw amino-acid sequence, 312 residues long: Protoheme IX farnesyltransferase 2 (312 aa).

Helical transmembrane passes span 31–51 (VMSL…GHIH), 52–72 (PVLG…SGAL), 119–139 (ALVN…YVVI), 152–172 (IVIG…AATG), 179–199 (LLLF…LALF), 225–245 (ILLY…LGYF), 247–267 (WVYG…AIEV), and 283–303 (LFAF…LDVV).

It belongs to the UbiA prenyltransferase family. Protoheme IX farnesyltransferase subfamily.

The protein resides in the cell inner membrane. It catalyses the reaction heme b + (2E,6E)-farnesyl diphosphate + H2O = Fe(II)-heme o + diphosphate. The protein operates within porphyrin-containing compound metabolism; heme O biosynthesis; heme O from protoheme: step 1/1. In terms of biological role, converts heme B (protoheme IX) to heme O by substitution of the vinyl group on carbon 2 of heme B porphyrin ring with a hydroxyethyl farnesyl side group. This Nitrobacter winogradskyi (strain ATCC 25391 / DSM 10237 / CIP 104748 / NCIMB 11846 / Nb-255) protein is Protoheme IX farnesyltransferase 2.